A 217-amino-acid chain; its full sequence is Probable transaldolase (217 aa).

Lysine 83 serves as the catalytic Schiff-base intermediate with substrate.

The protein belongs to the transaldolase family. Type 3B subfamily.

It localises to the cytoplasm. The enzyme catalyses D-sedoheptulose 7-phosphate + D-glyceraldehyde 3-phosphate = D-erythrose 4-phosphate + beta-D-fructose 6-phosphate. The protein operates within carbohydrate degradation; pentose phosphate pathway; D-glyceraldehyde 3-phosphate and beta-D-fructose 6-phosphate from D-ribose 5-phosphate and D-xylulose 5-phosphate (non-oxidative stage): step 2/3. In terms of biological role, transaldolase is important for the balance of metabolites in the pentose-phosphate pathway. This chain is Probable transaldolase, found in Roseobacter denitrificans (strain ATCC 33942 / OCh 114) (Erythrobacter sp. (strain OCh 114)).